The primary structure comprises 314 residues: Olfactory receptor 5P72 (314 aa).

The Extracellular segment spans residues 1–28; it reads MAFLEVGNHTAVTEFILLGLTDDPVLRV. An N-linked (GlcNAc...) asparagine glycan is attached at Asn-8. The helical transmembrane segment at 29–49 threads the bilayer; that stretch reads VLFTIILCIYLVTVMGNLSTI. Over 50–57 the chain is Cytoplasmic; the sequence is LLIRVSSQ. Residues 58–78 form a helical membrane-spanning segment; the sequence is LHHPMYFFLSHLASVDMGLSS. Over 79 to 102 the chain is Extracellular; sequence SVTPNMLLNFLIERNTISYLGCGI. Cys-100 and Cys-192 are oxidised to a cystine. The helical transmembrane segment at 103-123 threads the bilayer; sequence QQSLADFFGSVECFLLAAMAY. The Cytoplasmic portion of the chain corresponds to 124–136; the sequence is DRFMAICNPLLYS. The chain crosses the membrane as a helical span at residues 137–157; the sequence is TKMSTKVCVQLVVGSYIGGFL. Topologically, residues 158 to 199 are extracellular; that stretch reads NASLIMFYFFSFLFCGPNRVDHFFCDFAPLVELSCSDVSVSV. The helical transmembrane segment at 200-220 threads the bilayer; the sequence is IVISFSAGSVTMITVFVIAVS. Over 221–240 the chain is Cytoplasmic; the sequence is YSYILITILKMHSIEGRHKA. Residues 241–261 form a helical membrane-spanning segment; it reads FSTCTSHLTAVTLYYGTITFI. Over 262-274 the chain is Extracellular; the sequence is YVMPKSSFSTDQN. A helical transmembrane segment spans residues 275-295; the sequence is KVVSVFYMVMIPMLNPLIYSL. Topologically, residues 296–314 are cytoplasmic; it reads RNNEIKGAIKRQLGKKMSC.

The protein belongs to the G-protein coupled receptor 1 family.

The protein localises to the cell membrane. Potential odorant receptor. The polypeptide is Olfactory receptor 5P72 (Mus musculus (Mouse)).